A 342-amino-acid chain; its full sequence is MKIRENIENFERIKLNKVAKFSDESVGRERLEEPDEIRTCFMVDRDRIIHSKSFRRLKRKTQVFIRTYGDHYRTRLVHTLEVSQVARTIGVALSLNEYLIEAIALGHDLGHAAFAHIGEDVLNDFLPGGFKHNEQSVRVAKKIEKNGLGLNLTKEVLDGILNHSGFSNVSKVAGTFEGQVVRFADKIAYVNHDIDDSIRAGILKEDDLPKNIIEILGASGSERIDTLVKDCVFNTIDNIDKGEPRVSLSKEIGDAFVQLRKFLFDNIYLGKYLEDERKKAEFVLEKVIEYYYNNWEEMPDLYRNICEEEGIHRGVTDYVAGMTDDYCTNEFNKIYIPKFVMY.

Positions 75–190 constitute an HD domain; sequence RLVHTLEVSQ…VRFADKIAYV (116 aa).

This sequence belongs to the dGTPase family. Type 2 subfamily.

The polypeptide is Deoxyguanosinetriphosphate triphosphohydrolase-like protein (Clostridium perfringens (strain 13 / Type A)).